We begin with the raw amino-acid sequence, 238 residues long: Phosphoribosylaminoimidazole-succinocarboxamide synthase (238 aa).

This sequence belongs to the SAICAR synthetase family.

The catalysed reaction is 5-amino-1-(5-phospho-D-ribosyl)imidazole-4-carboxylate + L-aspartate + ATP = (2S)-2-[5-amino-1-(5-phospho-beta-D-ribosyl)imidazole-4-carboxamido]succinate + ADP + phosphate + 2 H(+). The protein operates within purine metabolism; IMP biosynthesis via de novo pathway; 5-amino-1-(5-phospho-D-ribosyl)imidazole-4-carboxamide from 5-amino-1-(5-phospho-D-ribosyl)imidazole-4-carboxylate: step 1/2. In Methanococcoides burtonii (strain DSM 6242 / NBRC 107633 / OCM 468 / ACE-M), this protein is Phosphoribosylaminoimidazole-succinocarboxamide synthase.